The sequence spans 493 residues: Geraniol 8-hydroxylase (493 aa).

Topologically, residues 1 to 6 (MDYLTI) are lumenal. Residues 7-23 (ILTLLFALTLYEAFSYL) traverse the membrane as a helical segment. Residues 24-493 (SRRTKNLPPG…HPLRAVPSTL (470 aa)) are Cytoplasmic-facing. Residue Cys-436 coordinates heme.

This sequence belongs to the cytochrome P450 family. Requires heme as cofactor. In terms of tissue distribution, expressed in roots, stems, leaves and flower buds. Hardly detected in mature flowers and fruits. Expressed in the internal phloem-associated parenchyma.

The protein resides in the endoplasmic reticulum membrane. It catalyses the reaction (2E)-geraniol + reduced [NADPH--hemoprotein reductase] + O2 = (6E)-8-hydroxygeraniol + oxidized [NADPH--hemoprotein reductase] + H2O + H(+). Its function is as follows. Hydroxylase involved in the biosynthesis of hydroxygeraniol, a precursor of the terpenoid indole alkaloids such as vinblastine and vincristine. Also able to hydroxylate in vitro nerol and to catalyze 3'-hydroxylation of the flavanone naringenin to form eriodictyol. No activity with apigenin, kaempferol, p-coumaric acid and ferulic acid as substrates. In Catharanthus roseus (Madagascar periwinkle), this protein is Geraniol 8-hydroxylase (CYP76B6).